A 335-amino-acid polypeptide reads, in one-letter code: F420-dependent glucose-6-phosphate dehydrogenase 1 (335 aa).

Position 38 (Asp38) interacts with coenzyme F420-(gamma-Glu)n. The active-site Proton donor is His39. Residues Thr75 and 106 to 107 contribute to the coenzyme F420-(gamma-Glu)n site; that span reads TG. Residue Glu108 is the Proton acceptor of the active site. Coenzyme F420-(gamma-Glu)n contacts are provided by residues Asn111, 176-177, and 179-180; these read GG and VV. Residues Thr194, Lys197, Lys258, and Arg282 each contribute to the substrate site.

The protein belongs to the F420-dependent glucose-6-phosphate dehydrogenase family. Homodimer.

It catalyses the reaction oxidized coenzyme F420-(gamma-L-Glu)(n) + D-glucose 6-phosphate + H(+) = 6-phospho-D-glucono-1,5-lactone + reduced coenzyme F420-(gamma-L-Glu)(n). Its function is as follows. Catalyzes the coenzyme F420-dependent oxidation of glucose 6-phosphate (G6P) to 6-phosphogluconolactone. The protein is F420-dependent glucose-6-phosphate dehydrogenase 1 of Rhodococcus jostii (strain RHA1).